Consider the following 433-residue polypeptide: Serine--tRNA ligase (433 aa).

235 to 237 is an L-serine binding site; the sequence is TSE. Residue 266-268 participates in ATP binding; the sequence is RSE. An L-serine-binding site is contributed by Glu289. 353-356 contributes to the ATP binding site; that stretch reads EISS. Position 388 (Ser388) interacts with L-serine.

Belongs to the class-II aminoacyl-tRNA synthetase family. Type-1 seryl-tRNA synthetase subfamily. Homodimer. The tRNA molecule binds across the dimer.

Its subcellular location is the cytoplasm. The catalysed reaction is tRNA(Ser) + L-serine + ATP = L-seryl-tRNA(Ser) + AMP + diphosphate + H(+). It carries out the reaction tRNA(Sec) + L-serine + ATP = L-seryl-tRNA(Sec) + AMP + diphosphate + H(+). Its pathway is aminoacyl-tRNA biosynthesis; selenocysteinyl-tRNA(Sec) biosynthesis; L-seryl-tRNA(Sec) from L-serine and tRNA(Sec): step 1/1. Its function is as follows. Catalyzes the attachment of serine to tRNA(Ser). Is also able to aminoacylate tRNA(Sec) with serine, to form the misacylated tRNA L-seryl-tRNA(Sec), which will be further converted into selenocysteinyl-tRNA(Sec). The protein is Serine--tRNA ligase of Burkholderia pseudomallei (strain 668).